Reading from the N-terminus, the 126-residue chain is Thioredoxin H-type 1 (126 aa).

The 119-residue stretch at alanine 2–alanine 120 folds into the Thioredoxin domain. Residues cysteine 46 and cysteine 49 each act as nucleophile in the active site. A disulfide bond links cysteine 46 and cysteine 49.

It belongs to the thioredoxin family. Plant H-type subfamily.

It localises to the cytoplasm. In terms of biological role, participates in various redox reactions through the reversible oxidation of the active center dithiol to a disulfide. The H form is known to activate a number of cytosolic enzymes. The polypeptide is Thioredoxin H-type 1 (Nicotiana tabacum (Common tobacco)).